The primary structure comprises 151 residues: ALK and LTK ligand 2 (151 aa).

The first 25 residues, 1-25, serve as a signal peptide directing secretion; that stretch reads MRVSGRPMLLALLLLLSTVGDPGHA. Disulfide bonds link C112-C148 and C126-C135.

Belongs to the ALKAL family. Homodimer.

It localises to the secreted. It is found in the cell membrane. In terms of biological role, cytokine that acts as a physiological ligand for receptor tyrosine kinases LTK and ALK, leading to their activation. Cytokine-binding is sufficient to activate LTK. In contrast, ALKAL2-driven activation of ALK is coupled with heparin-binding to ALK. Stimulation of ALK signaling is involved in neural development and regulation of energy expenditure. The chain is ALK and LTK ligand 2 from Rattus norvegicus (Rat).